A 490-amino-acid polypeptide reads, in one-letter code: Protein nucleotidyltransferase YdiU (490 aa).

Positions 94, 96, 97, 117, 129, 130, 180, and 187 each coordinate ATP. Residue Asp256 is the Proton acceptor of the active site. Residues Asn257 and Asp266 each contribute to the Mg(2+) site. Residue Asp266 coordinates ATP.

This sequence belongs to the SELO family. Requires Mg(2+) as cofactor. The cofactor is Mn(2+).

It catalyses the reaction L-seryl-[protein] + ATP = 3-O-(5'-adenylyl)-L-seryl-[protein] + diphosphate. The catalysed reaction is L-threonyl-[protein] + ATP = 3-O-(5'-adenylyl)-L-threonyl-[protein] + diphosphate. The enzyme catalyses L-tyrosyl-[protein] + ATP = O-(5'-adenylyl)-L-tyrosyl-[protein] + diphosphate. It carries out the reaction L-histidyl-[protein] + UTP = N(tele)-(5'-uridylyl)-L-histidyl-[protein] + diphosphate. It catalyses the reaction L-seryl-[protein] + UTP = O-(5'-uridylyl)-L-seryl-[protein] + diphosphate. The catalysed reaction is L-tyrosyl-[protein] + UTP = O-(5'-uridylyl)-L-tyrosyl-[protein] + diphosphate. Nucleotidyltransferase involved in the post-translational modification of proteins. It can catalyze the addition of adenosine monophosphate (AMP) or uridine monophosphate (UMP) to a protein, resulting in modifications known as AMPylation and UMPylation. The polypeptide is Protein nucleotidyltransferase YdiU (Clostridium perfringens (strain ATCC 13124 / DSM 756 / JCM 1290 / NCIMB 6125 / NCTC 8237 / Type A)).